Reading from the N-terminus, the 210-residue chain is Keratin-associated protein 26-1 (210 aa).

This sequence belongs to the PMG family. Interacts with hair keratins. In terms of tissue distribution, localized high up in the well differentiated portion of the hair follicle cuticle (about 10-15 cell layers above the apex of the dermal papilla).

In the hair cortex, hair keratin intermediate filaments are embedded in an interfilamentous matrix, consisting of hair keratin-associated proteins (KRTAP), which are essential for the formation of a rigid and resistant hair shaft through their extensive disulfide bond cross-linking with abundant cysteine residues of hair keratins. The matrix proteins include the high-sulfur and high-glycine-tyrosine keratins. This Homo sapiens (Human) protein is Keratin-associated protein 26-1 (KRTAP26-1).